The following is a 99-amino-acid chain: Probable small ribosomal subunit protein cS23 (99 aa).

The protein belongs to the chloroplast-specific ribosomal protein cS23 family. Part of the 30S ribosomal subunit.

Its function is as follows. Probably a ribosomal protein or a ribosome-associated protein. This is Probable small ribosomal subunit protein cS23 from Synechococcus sp. (strain JA-2-3B'a(2-13)) (Cyanobacteria bacterium Yellowstone B-Prime).